A 229-amino-acid polypeptide reads, in one-letter code: tRNA (guanine-N(7)-)-methyltransferase (229 aa).

Residues glutamate 62, glutamate 87, aspartate 114, and aspartate 137 each coordinate S-adenosyl-L-methionine. Aspartate 137 is a catalytic residue. Lysine 141 lines the substrate pocket. The interaction with RNA stretch occupies residues 143-148; the sequence is KHNKRR. Substrate-binding positions include aspartate 173 and 208–211; that span reads TKFE.

This sequence belongs to the class I-like SAM-binding methyltransferase superfamily. TrmB family.

It carries out the reaction guanosine(46) in tRNA + S-adenosyl-L-methionine = N(7)-methylguanosine(46) in tRNA + S-adenosyl-L-homocysteine. The protein operates within tRNA modification; N(7)-methylguanine-tRNA biosynthesis. In terms of biological role, catalyzes the formation of N(7)-methylguanine at position 46 (m7G46) in tRNA. This chain is tRNA (guanine-N(7)-)-methyltransferase, found in Francisella philomiragia subsp. philomiragia (strain ATCC 25017 / CCUG 19701 / FSC 153 / O#319-036).